A 429-amino-acid polypeptide reads, in one-letter code: Probable E3 ubiquitin-protein ligase makorin-1 (429 aa).

3 C3H1-type zinc fingers span residues 18-45, 48-75, and 153-180; these read WTKHVTCRYFMHGLCKEGDNCRYSHDLT, KPAAMMCKFFQKGNCVFGERCRFEHCKP, and ELRKQLCPYAAVGECRYGVNCAYLHGDV. The interval 181 to 208 is makorin-type Cys-His; that stretch reads CDMCGLQVLHPTDSSQRSEHTKACIEAH. The segment at 226–280 adopts an RING-type zinc-finger fold; that stretch reads CGVCMEVVFEKANPSERRFGILSNCSHCYCLKCIRKWRSAKQFESKIIKSCPECR. The segment at 309 to 338 adopts a C3H1-type 4 zinc-finger fold; sequence GMGRKPCRYFDEGRGICPFGANCFYKHAFP. Positions 343–362 are disordered; that stretch reads EEAQPQRRQTGSSSRNRNSR. The span at 348 to 358 shows a compositional bias: low complexity; it reads QRRQTGSSSRN.

It carries out the reaction S-ubiquitinyl-[E2 ubiquitin-conjugating enzyme]-L-cysteine + [acceptor protein]-L-lysine = [E2 ubiquitin-conjugating enzyme]-L-cysteine + N(6)-ubiquitinyl-[acceptor protein]-L-lysine.. It participates in protein modification; protein ubiquitination. Its function is as follows. E3 ubiquitin ligase catalyzing the covalent attachment of ubiquitin moieties onto substrate proteins. This Takifugu rubripes (Japanese pufferfish) protein is Probable E3 ubiquitin-protein ligase makorin-1.